The sequence spans 95 residues: Aspartyl/glutamyl-tRNA(Asn/Gln) amidotransferase subunit C (95 aa).

The protein belongs to the GatC family. In terms of assembly, heterotrimer of A, B and C subunits.

It catalyses the reaction L-glutamyl-tRNA(Gln) + L-glutamine + ATP + H2O = L-glutaminyl-tRNA(Gln) + L-glutamate + ADP + phosphate + H(+). It carries out the reaction L-aspartyl-tRNA(Asn) + L-glutamine + ATP + H2O = L-asparaginyl-tRNA(Asn) + L-glutamate + ADP + phosphate + 2 H(+). Functionally, allows the formation of correctly charged Asn-tRNA(Asn) or Gln-tRNA(Gln) through the transamidation of misacylated Asp-tRNA(Asn) or Glu-tRNA(Gln) in organisms which lack either or both of asparaginyl-tRNA or glutaminyl-tRNA synthetases. The reaction takes place in the presence of glutamine and ATP through an activated phospho-Asp-tRNA(Asn) or phospho-Glu-tRNA(Gln). In Pelobacter propionicus (strain DSM 2379 / NBRC 103807 / OttBd1), this protein is Aspartyl/glutamyl-tRNA(Asn/Gln) amidotransferase subunit C.